The sequence spans 69 residues: UPF0337 protein YjbJ (69 aa).

The protein belongs to the UPF0337 (CsbD) family.

This chain is UPF0337 protein YjbJ (yjbJ), found in Escherichia coli O157:H7.